The sequence spans 542 residues: MNVERKLESLSLQQQQQEEQQDESEQPNQGVEDEEEEEYDEEEYEEEEEDINFSKETLEAAMATKVSIEQYYTSLFKSLKERDDRRCFLEKKMEELNLREEQKSVKRRELDKKETEYIKSRRIRLTGHSFESIRIIGRGAFGEVRLVKMKKNNKFFAMKKLDKSKMIEKHQTIHVRSERDILADSNNIHGSNPWIVSLYYSFQDANFLYLIMEYVPGGDMMTQLIKYDTFTEDATRFYIAETVLALHSIHKLSYIHRDIKPDNLLIDQKGHIKVSDFGLCTGLQTNRVPTLAEIYKKYEGDNNIREEDQTPQSRSARFDSWKRQRRVLAYSNVGTPDYTAPEVLMKDGYSAECDWWSVGVIMFEMLVGYPPFCSESIRETYHKIMNWKQTLPKIMEEAKAEVNLSPEAQDLIERFLTDPMTRIGFNGVEEIQSHPFFKGVDWRRLRETRPPIIPQLSSPTDTSNFDHYEEEQQPEPMQPVQSKSRRKITSFDIPFIGYTYRNFDAMRDAFGSVNSRDAFGSINSREAFGSINNRDSLQGANM.

Residues 1–52 form a disordered region; sequence MNVERKLESLSLQQQQQEEQQDESEQPNQGVEDEEEEEYDEEEYEEEEEDIN. Low complexity predominate over residues 9–18; sequence SLSLQQQQQE. Residues 19–51 are compositionally biased toward acidic residues; it reads EQQDESEQPNQGVEDEEEEEYDEEEYEEEEEDI. Residues 130-437 enclose the Protein kinase domain; sequence FESIRIIGRG…VEEIQSHPFF (308 aa). ATP contacts are provided by residues 136–144 and Lys159; that span reads IGRGAFGEV. The active-site Proton acceptor is Asp258. In terms of domain architecture, AGC-kinase C-terminal spans 438 to 510; sequence KGVDWRRLRE…RNFDAMRDAF (73 aa). The tract at residues 452–486 is disordered; that stretch reads IIPQLSSPTDTSNFDHYEEEQQPEPMQPVQSKSRR. Residues 455-465 show a composition bias toward polar residues; the sequence is QLSSPTDTSNF.

It belongs to the protein kinase superfamily. AGC Ser/Thr protein kinase family.

The protein localises to the cytoplasm. It catalyses the reaction L-seryl-[protein] + ATP = O-phospho-L-seryl-[protein] + ADP + H(+). The catalysed reaction is L-threonyl-[protein] + ATP = O-phospho-L-threonyl-[protein] + ADP + H(+). The protein is Probable serine/threonine-protein kinase ndrB (ndrB) of Dictyostelium discoideum (Social amoeba).